The chain runs to 79 residues: Secretory calcium-binding phosphoprotein proline-glutamine rich 1 (79 aa).

Positions 1–15 (MKFLILAGLLSTATA) are cleaved as a signal peptide.

The protein localises to the secreted. Tooth-associated epithelia protein that may participate in structuring the basal lamina at cell-tooth interface. This chain is Secretory calcium-binding phosphoprotein proline-glutamine rich 1, found in Homo sapiens (Human).